The sequence spans 469 residues: MIHKPIPNSKPLTAYIDGLRGLLSIIIFNAHLTPVIILGYDKVSRSQVSTSPRNVLDIPLVASCVNNWVLFTIPILKLVYSASPAVCLFFAISGYVMSLKWVRYMNHRSQTSEINSARIFTDFGSSIFRRTLRLSLLAMASMIVPFALMKTGFFDRTVVQQHGLTKLERGMRFWLEQWEQFPARHESWWEQTCDLVQNCARIFTVFMQRRDEAFSPRYNPVLWTIKADLRASLALTVTHLALLGTKRSSRLQILAALAVLGVAVGSLECPLFWAGWIIAEIHHAAEQTPLAQGKGTGQPRQKTNTAGMDTFGKTVVLALGCYVASYPTWKPEKAPMFNTFHMMTPGLIVPPRTWHSLGAVLVLYSLRDVPLARRICESSVAQFLGTHSFAIYLIHFCLVISFGPDLFSWVWSRTGHENLQSLAVGFGITYSILFMAVLLTAAIFRRFIESPVNKCVDSLYRSASVRKEA.

The next 7 helical transmembrane spans lie at 21 to 41 (GLLS…LGYD), 70 to 90 (LFTI…CLFF), 134 to 154 (LSLL…TGFF), 253 to 273 (ILAA…PLFW), 346 to 366 (GLIV…LYSL), 391 to 411 (IYLI…SWVW), and 424 to 444 (VGFG…AAIF).

This sequence belongs to the acyltransferase 3 family.

The protein resides in the membrane. It participates in secondary metabolite biosynthesis. Its function is as follows. Acyltransferase; part of the gene cluster that mediates the biosynthesis of squalestatin S1 (SQS1, also known as zaragozic acid A), a heavily oxidized fungal polyketide that offers potent cholesterol lowering activity by targeting squalene synthase (SS). SQS1 is composed of a 2,8-dioxobicyclic[3.2.1]octane-3,4,5-tricarboxyclic acid core that is connected to two lipophilic polyketide arms. These initial steps feature the priming of an unusual benzoic acid starter unit onto the highly reducing polyketide synthase clz14, followed by oxaloacetate extension and product release to generate a tricarboxylic acid containing product. The phenylalanine ammonia lyase (PAL) clz10 and the acyl-CoA ligase clz12 are involved in transforming phenylalanine into benzoyl-CoA. The citrate synthase-like protein clz17 is involved in connecting the C-alpha-carbons of the hexaketide chain and oxaloacetate to afford the tricarboxylic acid unit. The potential hydrolytic enzymes, clz11 and clz13, are in close proximity to pks2 and may participate in product release. On the other side, the tetraketide arm is synthesized by a the squalestatin tetraketide synthase clz2 and enzymatically esterified to the core in the last biosynthetic step, by the acetyltransferase clz6. The biosynthesis of the tetraketide must involve 3 rounds of chain extension. After the first and second rounds methyl-transfer occurs, and in all rounds of extension the ketoreductase and dehydratase are active. The enoyl reductase and C-MeT of clz2 are not active in the final round of extension. The acetyltransferase clz6 appears to have a broad substrate selectivity for its acyl CoA substrate, allowing the in vitro synthesis of novel squalestatins. The biosynthesis of SQS1 requires several oxidative steps likely performed by oxidoreductases clz3, clz15 and clz16. Finally, in support of the identification of the cluster as being responsible for SQS1 production, the cluster contains a gene encoding a putative squalene synthase (SS) clz20, suggesting a likely mechanism for self-resistance. This is Acyltransferase clz18 from Cochliobolus lunatus (Filamentous fungus).